The sequence spans 325 residues: MVHYKSVFYKSAALVCGFVLAGASVAIASSEAAAKTRSKMSEFKRRAVSSPSGGRLSVLDGSFTALANDASFFEANPAGSANMTHSELTFAHTVGFNNSHAETLSYVGQSGNWGYGASMRMFFPESGFNFSPSTGPVCTPASNPIKKLGGLGIVNFSRRFGGLSIGANLKAGFRDAQGLTHLSLGTDVGLQWVGNVAKFFSSAEPNMYVGLSATNLGFTVKLPGSPFVLCRATGEQCCKTCSGRCTGVGTCCNGEKPCCKDCDCNCPCQDEATPGSPHATDTMLRAGFAYRPLSWFLFSVGVATRVNVSNLQVDHSGSALPMRLG.

Residues 1 to 28 (MVHYKSVFYKSAALVCGFVLAGASVAIA) form the signal peptide.

Belongs to the UPF0164 family.

The sequence is that of UPF0164 protein TP_0856 from Treponema pallidum (strain Nichols).